Here is a 79-residue protein sequence, read N- to C-terminus: UPF0154 protein SAG1601 (79 aa).

The chain crosses the membrane as a helical span at residues 5-25; it reads IWILLIIVALFGGLVGGIFIA.

This sequence belongs to the UPF0154 family.

Its subcellular location is the membrane. The polypeptide is UPF0154 protein SAG1601 (Streptococcus agalactiae serotype V (strain ATCC BAA-611 / 2603 V/R)).